The chain runs to 397 residues: Ribosomal RNA large subunit methyltransferase I (397 aa).

The region spanning 2–80 (AIRIKLKPGR…KEEAIDADFF (79 aa)) is the PUA domain.

Belongs to the methyltransferase superfamily. RlmI family.

It is found in the cytoplasm. It catalyses the reaction cytidine(1962) in 23S rRNA + S-adenosyl-L-methionine = 5-methylcytidine(1962) in 23S rRNA + S-adenosyl-L-homocysteine + H(+). Specifically methylates the cytosine at position 1962 (m5C1962) of 23S rRNA. The chain is Ribosomal RNA large subunit methyltransferase I from Shewanella denitrificans (strain OS217 / ATCC BAA-1090 / DSM 15013).